Reading from the N-terminus, the 339-residue chain is tRNA-specific 2-thiouridylase MnmA (339 aa).

ATP contacts are provided by residues alanine 8–serine 15 and methionine 34. Catalysis depends on cysteine 94, which acts as the Nucleophile. Cysteine 94 and cysteine 188 are joined by a disulfide. Position 118 (glycine 118) interacts with ATP. The interaction with tRNA stretch occupies residues lysine 136–glutamine 138. Cysteine 188 functions as the Cysteine persulfide intermediate in the catalytic mechanism. The tract at residues arginine 290–tyrosine 291 is interaction with tRNA.

Belongs to the MnmA/TRMU family.

The protein resides in the cytoplasm. The catalysed reaction is S-sulfanyl-L-cysteinyl-[protein] + uridine(34) in tRNA + AH2 + ATP = 2-thiouridine(34) in tRNA + L-cysteinyl-[protein] + A + AMP + diphosphate + H(+). Functionally, catalyzes the 2-thiolation of uridine at the wobble position (U34) of tRNA, leading to the formation of s(2)U34. This Nitratiruptor sp. (strain SB155-2) protein is tRNA-specific 2-thiouridylase MnmA.